We begin with the raw amino-acid sequence, 759 residues long: Arylphorin subunit C223 (759 aa).

Positions 1–15 are cleaved as a signal peptide; that stretch reads MKIAIVLLAIVGLAA.

The protein belongs to the hemocyanin family. In terms of assembly, heterohexamer. Fat body.

The protein resides in the secreted. The protein localises to the extracellular space. Arylphorin is a larval storage protein (LSP) which may serve as a storage protein used primarily as a source of aromatic amino acids for protein synthesis during metamorphosis. It is a constituent of the sclerotizing system of the cuticle, and serves as a carrier for ecdysteroid hormone. The polypeptide is Arylphorin subunit C223 (Calliphora vicina (Blue blowfly)).